Here is a 321-residue protein sequence, read N- to C-terminus: MLVDSFNRVIDYIRVSVTKQCNFRCQYCMPATPLNFFDNEELLPLDNVLEFLKIAIDEGVKKIRITGGEPLLRKGLDEFIAKLHAYNKEVALVLSTNGFLLKKMAKDLKKAGLSRVNVSLDSLKSDRVLKISQKDALKNTLEGIEESLKVGLKLKLNTVVMKSVNGDEILDLLEYAKNRRIQIRYIEFMENTHAKSFVKGLKEEEILDLIAQKYKIMETEKPKQGSSKIYTLENGYQFGIIAPHSDDFCQSCNRIRLASDGKICPCLYYQDAIDAKEAIINKDTKMMKRLLKQSVINKPEKNMWNDKNSETPTRAFYYTGG.

Residues 5-233 (SFNRVIDYIR…QGSSKIYTLE (229 aa)) enclose the Radical SAM core domain. Arg14 contacts GTP. The [4Fe-4S] cluster site is built by Cys21 and Cys25. Tyr27 is a binding site for S-adenosyl-L-methionine. Cys28 is a binding site for [4Fe-4S] cluster. Arg64 is a GTP binding site. Gly68 contributes to the S-adenosyl-L-methionine binding site. Ser95 serves as a coordination point for GTP. Ser119 is a binding site for S-adenosyl-L-methionine. Lys155 contacts GTP. An S-adenosyl-L-methionine-binding site is contributed by Met189. The [4Fe-4S] cluster site is built by Cys249 and Cys252. 254 to 256 (RIR) is a GTP binding site. Cys266 provides a ligand contact to [4Fe-4S] cluster.

It belongs to the radical SAM superfamily. MoaA family. As to quaternary structure, monomer and homodimer. [4Fe-4S] cluster serves as cofactor.

The enzyme catalyses GTP + AH2 + S-adenosyl-L-methionine = (8S)-3',8-cyclo-7,8-dihydroguanosine 5'-triphosphate + 5'-deoxyadenosine + L-methionine + A + H(+). It participates in cofactor biosynthesis; molybdopterin biosynthesis. Functionally, catalyzes the cyclization of GTP to (8S)-3',8-cyclo-7,8-dihydroguanosine 5'-triphosphate. This Helicobacter pylori (strain HPAG1) protein is GTP 3',8-cyclase.